The following is a 290-amino-acid chain: Pirin (290 aa).

4 residues coordinate Fe cation: His-56, His-58, His-101, and Glu-103.

It belongs to the pirin family. As to quaternary structure, may interact with NF1/CTF1. Interacts with BCL3. Identified in a complex comprised of PIR, BLC3, NFKB1 and target DNA. Fe cation serves as cofactor. In terms of tissue distribution, weakly expressed in bone marrow.

The protein resides in the nucleus. The protein localises to the cytoplasm. The enzyme catalyses quercetin + O2 = 2-(3,4-dihydroxybenzoyloxy)-4,6-dihydroxybenzoate + CO. It participates in flavonoid metabolism; quercetin degradation. Functionally, transcriptional coregulator of NF-kappa-B which facilitates binding of NF-kappa-B proteins to target kappa-B genes in a redox-state-dependent manner. May be required for efficient terminal myeloid maturation of hematopoietic cells. Has quercetin 2,3-dioxygenase activity (in vitro). The sequence is that of Pirin (Pir) from Mus musculus (Mouse).